The primary structure comprises 132 residues: DNA-binding protein inhibitor ID-2 (132 aa).

Residues 23 to 75 (ARSKTPVDDPMSLLYNMNDCYSKLKELVPSIPQNKKVSKMEILQHVIDYILDL) form the bHLH domain. A Nuclear export signal motif is present at residues 105 to 114 (LNTDISILSL).

As to quaternary structure, heterodimer with other HLH proteins.

The protein localises to the cytoplasm. It is found in the nucleus. In terms of biological role, transcriptional regulator (lacking a basic DNA binding domain) which negatively regulates the basic helix-loop-helix (bHLH) transcription factors by forming heterodimers and inhibiting their DNA binding and transcriptional activity. Inhibits the activity of both neurogenic (neurod1/neuroD) and myogenic (myod1/myoD) bHLH factors. May play a role in the regulation of the circadian clock. The protein is DNA-binding protein inhibitor ID-2 of Xenopus tropicalis (Western clawed frog).